Consider the following 203-residue polypeptide: Outer-membrane lipoprotein carrier protein (203 aa).

Residues 1 to 21 (MKKMAIACALLSSVVASSVWA) form the signal peptide. The segment at 178–203 (QQNGAVDPSKFTFTPPQGVTIDDQRK) is disordered.

It belongs to the LolA family. Monomer.

The protein resides in the periplasm. Its function is as follows. Participates in the translocation of lipoproteins from the inner membrane to the outer membrane. Only forms a complex with a lipoprotein if the residue after the N-terminal Cys is not an aspartate (The Asp acts as a targeting signal to indicate that the lipoprotein should stay in the inner membrane). This is Outer-membrane lipoprotein carrier protein from Salmonella agona (strain SL483).